Consider the following 418-residue polypeptide: Tol-Pal system protein TolB (418 aa).

The signal sequence occupies residues 1–21 (MKLFVQLVLFISLFIPYSTKA).

The protein belongs to the TolB family. As to quaternary structure, the Tol-Pal system is composed of five core proteins: the inner membrane proteins TolA, TolQ and TolR, the periplasmic protein TolB and the outer membrane protein Pal. They form a network linking the inner and outer membranes and the peptidoglycan layer.

The protein localises to the periplasm. In terms of biological role, part of the Tol-Pal system, which plays a role in outer membrane invagination during cell division and is important for maintaining outer membrane integrity. The sequence is that of Tol-Pal system protein TolB from Wolbachia pipientis subsp. Culex pipiens (strain wPip).